Here is a 142-residue protein sequence, read N- to C-terminus: Cytochrome c-type biogenesis protein CcmE (142 aa).

The Cytoplasmic segment spans residues 1-2 (MK). The chain crosses the membrane as a helical; Signal-anchor for type II membrane protein span at residues 3–23 (GKYLLGILVILGALGYMVFGG). Topologically, residues 24 to 142 (LGRNLVYFLT…EVRKLIEEAQ (119 aa)) are periplasmic. Heme-binding residues include His-118 and Tyr-122.

Belongs to the CcmE/CycJ family.

The protein resides in the cell inner membrane. Its function is as follows. Heme chaperone required for the biogenesis of c-type cytochromes. Transiently binds heme delivered by CcmC and transfers the heme to apo-cytochromes in a process facilitated by CcmF and CcmH. This is Cytochrome c-type biogenesis protein CcmE from Thermus thermophilus (strain ATCC 27634 / DSM 579 / HB8).